The following is a 221-amino-acid chain: Probable chemoreceptor glutamine deamidase CheD 1 (221 aa).

The protein belongs to the CheD family.

The catalysed reaction is L-glutaminyl-[protein] + H2O = L-glutamyl-[protein] + NH4(+). Probably deamidates glutamine residues to glutamate on methyl-accepting chemotaxis receptors (MCPs), playing an important role in chemotaxis. The sequence is that of Probable chemoreceptor glutamine deamidase CheD 1 from Methanosarcina mazei (strain ATCC BAA-159 / DSM 3647 / Goe1 / Go1 / JCM 11833 / OCM 88) (Methanosarcina frisia).